We begin with the raw amino-acid sequence, 229 residues long: Transmembrane emp24 domain-containing protein 5 (229 aa).

Residues 1 to 27 (MGGRMWLPFPVLLLSALPAALLRGAAG) form the signal peptide. The Lumenal segment spans residues 28–196 (FTPSLDSDFT…IQESNFDRVN (169 aa)). The GOLD domain occupies 45–126 (KECFYQPMPL…EKVIFFELIL (82 aa)). The helical transmembrane segment at 197 to 217 (FWSVVNLMVMVVVSAIQVYTL) threads the bilayer. The Cytoplasmic portion of the chain corresponds to 218–229 (KSLFEDKRKSRT).

Belongs to the EMP24/GP25L family. In terms of assembly, interacts with TMED9 and TMED10.

It localises to the endoplasmic reticulum membrane. It is found in the golgi apparatus. The protein resides in the cis-Golgi network membrane. Its subcellular location is the endoplasmic reticulum-Golgi intermediate compartment membrane. Potential role in vesicular protein trafficking, mainly in the early secretory pathway. Required for the maintenance of the Golgi apparatus; involved in protein exchange between Golgi stacks during assembly. Probably not required for COPI-vesicle-mediated retrograde transport. This is Transmembrane emp24 domain-containing protein 5 (Tmed5) from Mus musculus (Mouse).